The following is a 515-amino-acid chain: N-fatty-acyl-amino acid synthase/hydrolase PM20D1.1 (515 aa).

The N-terminal stretch at Met1 to Gly34 is a signal peptide. N-linked (GlcNAc...) asparagine glycosylation is found at Asn50, Asn87, and Asn118. His140 contributes to the Zn(2+) binding site. Residue Asp142 is part of the active site. A Zn(2+)-binding site is contributed by Asp173. Glu207 (proton acceptor) is an active-site residue. Residues Glu208, Asp234, and His480 each coordinate Zn(2+).

It belongs to the peptidase M20A family. It depends on Zn(2+) as a cofactor.

The protein resides in the secreted. It carries out the reaction an N-acyl-L-amino acid + H2O = an L-alpha-amino acid + a carboxylate. It catalyses the reaction an N-acyl-aromatic L-alpha-amino acid + H2O = an aromatic L-alpha-amino acid + a carboxylate. The catalysed reaction is N-(5Z,8Z,11Z,14Z)-eicosatetraenoyl-glycine + H2O = (5Z,8Z,11Z,14Z)-eicosatetraenoate + glycine. The enzyme catalyses N-hexadecanoyl-L-phenylalanine + H2O = hexadecanoate + L-phenylalanine. It carries out the reaction N-octadecanoyl-L-phenylalanine + H2O = octadecanoate + L-phenylalanine. It catalyses the reaction N-(4Z,7Z,10Z,13Z,16Z,19Z-docosahexaenoyl)-L-phenylalanine + H2O = (4Z,7Z,10Z,13Z,16Z,19Z)-docosahexaenoate + L-phenylalanine. The catalysed reaction is N-(9Z-octadecenoyl)-L-asparagine + H2O = L-asparagine + (9Z)-octadecenoate. The enzyme catalyses (9Z)-octadecenoate + glycine = N-(9Z-octadecenoyl)glycine + H2O. It carries out the reaction N-(9Z-octadecenoyl)-L-lysine + H2O = L-lysine + (9Z)-octadecenoate. It catalyses the reaction N-(9Z-octadecenoyl)-L-methionine + H2O = (9Z)-octadecenoate + L-methionine. The catalysed reaction is N-(9Z-octadecenoyl)-L-serine + H2O = L-serine + (9Z)-octadecenoate. The enzyme catalyses N-(9Z-octadecenoyl)-L-tryptophan + H2O = L-tryptophan + (9Z)-octadecenoate. It carries out the reaction N-(9Z-octadecenoyl)-L-tyrosine + H2O = L-tyrosine + (9Z)-octadecenoate. It catalyses the reaction N-(9Z-octadecenoyl)-L-glutamine + H2O = L-glutamine + (9Z)-octadecenoate. The catalysed reaction is N-(5Z,8Z,11Z,14Z-eicosatetraenoyl)-L-serine + H2O = (5Z,8Z,11Z,14Z)-eicosatetraenoate + L-serine. The enzyme catalyses (5Z,8Z,11Z,14Z)-eicosatetraenoate + L-phenylalanine = N-(5Z,8Z,11Z,14Z-eicosatetraenoyl)-L-phenylalanine + H2O. It carries out the reaction N-(9Z-octadecenoyl)-L-leucine + H2O = L-leucine + (9Z)-octadecenoate. It catalyses the reaction L-phenylalanine + (9Z)-octadecenoate = N-(9Z-octadecenoyl)-L-phenylalanine + H2O. It functions in the pathway amino-acid metabolism. Its pathway is energy metabolism; electron transfer. It participates in lipid metabolism; fatty acid metabolism. With respect to regulation, lipoproteins are powerful coactivators of PM20D1 activity in vitro and NAA biosynthesis in vivo. Its function is as follows. Secreted enzyme that regulates the endogenous N-fatty acyl amino acid (NAAs) tissue and circulating levels by functioning as a bidirectional NAA synthase/hydrolase. It condenses free fatty acids and free amino acids to generate NAAs and bidirectionally catalyzes the reverse hydrolysis reaction. Some of these NAAs stimulate oxidative metabolism via mitochondrial uncoupling, increasing energy expenditure in a UPC1-independent manner. Thereby, this secreted protein may indirectly regulate whole body energy expenditure. PM20D1 circulates in tight association with both low- and high-density (LDL and HDL,respectively) lipoprotein particles. In Danio rerio (Zebrafish), this protein is N-fatty-acyl-amino acid synthase/hydrolase PM20D1.1.